The sequence spans 422 residues: Enolase (422 aa).

Gln163 contributes to the (2R)-2-phosphoglycerate binding site. The active-site Proton donor is the Glu205. Mg(2+) contacts are provided by Asp242, Glu283, and Asp310. Lys335, Arg364, Ser365, and Lys386 together coordinate (2R)-2-phosphoglycerate. The active-site Proton acceptor is the Lys335.

It belongs to the enolase family. Mg(2+) serves as cofactor.

The protein resides in the cytoplasm. The protein localises to the secreted. It localises to the cell surface. It carries out the reaction (2R)-2-phosphoglycerate = phosphoenolpyruvate + H2O. The protein operates within carbohydrate degradation; glycolysis; pyruvate from D-glyceraldehyde 3-phosphate: step 4/5. Functionally, catalyzes the reversible conversion of 2-phosphoglycerate (2-PG) into phosphoenolpyruvate (PEP). It is essential for the degradation of carbohydrates via glycolysis. This chain is Enolase, found in Bdellovibrio bacteriovorus (strain ATCC 15356 / DSM 50701 / NCIMB 9529 / HD100).